The chain runs to 64 residues: Conotoxin LiC121 (64 aa).

A signal peptide spans 1 to 22 (MRCVPVFIILLLLSPSAPSVDA). Positions 23–48 (HPKTKDDVPLASFHDDAKRTLQRLWI) are excised as a propeptide.

Belongs to the conotoxin T superfamily. Post-translationally, contains 2 disulfide bonds that can be either 'C1-C3, C2-C4' or 'C1-C4, C2-C3', since these disulfide connectivities have been observed for conotoxins with cysteine framework V (for examples, see AC P0DQQ7 and AC P81755). In terms of tissue distribution, expressed by the venom duct.

It is found in the secreted. The protein is Conotoxin LiC121 of Conus lividus (Livid cone).